Here is a 245-residue protein sequence, read N- to C-terminus: Polyhedrin (245 aa).

The protein belongs to the polyhedrin family.

Major component of the virus occlusion bodies, which are large proteinaceous structures (polyhedra), that protect the virus from the outside environment for extended periods until they are ingested by insect larvae. This chain is Polyhedrin, found in Lepidoptera (butterflies and moths).